The chain runs to 1035 residues: Cell-division control histidine kinase PdhS (1035 aa).

The segment at 1 to 613 (MSGSYPFIDI…HADGSEEPVD (613 aa)) is important for polar localization. The tract at residues 500–533 (QGLANTRAESETPVSETSSIEPVEPTPPVKTRSE) is disordered. Residues 614–1035 (AHLNAIAWRG…VFPPTRVLAD (422 aa)) are interaction with DivK. Residues 659–730 (HVEELKTILD…YLHGLSGNGV (72 aa)) form the PAS domain. In terms of domain architecture, Histidine kinase spans 802-1031 (RISHEIRTPL…VVEIVFPPTR (230 aa)). Residue His-805 is modified to Phosphohistidine; by autocatalysis.

Interacts with DivK.

It localises to the cytoplasm. The enzyme catalyses ATP + protein L-histidine = ADP + protein N-phospho-L-histidine.. Its function is as follows. Functions as a polar differentiation marker. Essential protein that, by localizing in the old pole of dividing cells, controls cell division and maturation, probably through control of DivK phosphorylation status and cellular distribution, which in turn regulates CtrA, a transcriptional regulator of the minB operon. The asymmetrical localization of this protein is probably required for cells to enter a new division cycle. This chain is Cell-division control histidine kinase PdhS (pdhS), found in Brucella suis biovar 1 (strain 1330).